Here is a 150-residue protein sequence, read N- to C-terminus: 3-dehydroquinate dehydratase (150 aa).

Tyr22 functions as the Proton acceptor in the catalytic mechanism. 3 residues coordinate substrate: Asn73, His79, and Asp86. His99 functions as the Proton donor in the catalytic mechanism. Substrate is bound by residues Leu100–Thr101 and Arg110.

It belongs to the type-II 3-dehydroquinase family. Homododecamer.

It catalyses the reaction 3-dehydroquinate = 3-dehydroshikimate + H2O. The protein operates within metabolic intermediate biosynthesis; chorismate biosynthesis; chorismate from D-erythrose 4-phosphate and phosphoenolpyruvate: step 3/7. Functionally, catalyzes a trans-dehydration via an enolate intermediate. In Desulforudis audaxviator (strain MP104C), this protein is 3-dehydroquinate dehydratase.